Here is a 1249-residue protein sequence, read N- to C-terminus: Myosin-1 (1249 aa).

Positions 1 to 40 (MGHSRRPAGGEKKSRFGRSKAAADVGDGRQAGGKPQVRKA) are disordered. The 680-residue stretch at 50 to 729 (IGVSDLTLLS…TLFALEAMRD (680 aa)) folds into the Myosin motor domain. Residue 143 to 150 (GESGAGKT) coordinates ATP. Position 371 is a phosphoserine (Ser371). The segment at 418–500 (SIGILDIYGF…PGVFAALNDA (83 aa)) is actin-binding. IQ domains follow at residues 733–753 (HNMAIRIQRAWRNYLRYRTEC) and 754–779 (AIRIQRFWRRMNGGLELLKLRDQGHT). The TH1 domain maps to 787–979 (RRRMSILGSR…PGEPPNSVSK (193 aa)). 2 disordered regions span residues 959–1081 (DSYK…KAKA) and 1127–1249 (EAYL…DDDW). Low complexity-rich tracts occupy residues 1026-1035 (PQTAAAQPTP) and 1043-1061 (PVAAVAASHSRTSSTASAR). Positions 1062-1073 (APPPPPPAPPAA) are enriched in pro residues. The SH3 domain maps to 1074–1135 (AGPKKAKALY…PEAYLEEQVA (62 aa)). The span at 1137–1149 (TPKPAPPPPPPVA) shows a compositional bias: pro residues. Residues 1150 to 1170 (PRASPAPVNGSAAVAAAKAKA) are compositionally biased toward low complexity. Residues 1199–1221 (VSMNSQGDSSGASGRGTPSSVSN) show a composition bias toward polar residues. Positions 1222–1235 (ASLAGGLAEALRAR) are enriched in low complexity.

The protein belongs to the TRAFAC class myosin-kinesin ATPase superfamily. Myosin family. As to quaternary structure, interacts (via IQ domains) with camA. Phosphorylation of the TEDS site (Ser-371) is required for the polarization of the actin cytoskeleton. Phosphorylation probably activates the myosin-I ATPase activity.

It is found in the cytoplasm. It localises to the cytoskeleton. The protein resides in the actin patch. In terms of biological role, type-I myosin implicated in the organization of the actin cytoskeleton. Required for proper actin cytoskeleton polarization. At the cell cortex, assembles in patch-like structures together with proteins from the actin-polymerizing machinery and promotes actin assembly. Functions as actin nucleation-promoting factor (NPF) for the Arp2/3 complex. Plays an important role in polarized growth, spore germination, hyphal morphogenesis, and septal wall formation. The polypeptide is Myosin-1 (myoA) (Emericella nidulans (strain FGSC A4 / ATCC 38163 / CBS 112.46 / NRRL 194 / M139) (Aspergillus nidulans)).